Here is a 120-residue protein sequence, read N- to C-terminus: MPESLLPLDRLMTTLRTRAAERPEGSYTTKLMNGGAEAIGRKIREEAEELIEAADEPDEAGRQHAIYEAGDLIYHAMVLMAWRGIELDEVAAELARREGTSGLVEKASRPAKKDSGTADS.

Positions 97-120 are disordered; sequence REGTSGLVEKASRPAKKDSGTADS. Basic and acidic residues predominate over residues 106 to 120; it reads KASRPAKKDSGTADS.

This sequence belongs to the PRA-PH family.

The protein resides in the cytoplasm. It catalyses the reaction 1-(5-phospho-beta-D-ribosyl)-ATP + H2O = 1-(5-phospho-beta-D-ribosyl)-5'-AMP + diphosphate + H(+). It functions in the pathway amino-acid biosynthesis; L-histidine biosynthesis; L-histidine from 5-phospho-alpha-D-ribose 1-diphosphate: step 2/9. The protein is Phosphoribosyl-ATP pyrophosphatase of Rhodopirellula baltica (strain DSM 10527 / NCIMB 13988 / SH1).